The following is a 453-amino-acid chain: Ribulose bisphosphate carboxylase large chain (453 aa).

Residues 1-2 (MS) constitute a propeptide that is removed on maturation. At Pro-3 the chain carries N-acetylproline. N6,N6,N6-trimethyllysine is present on Lys-14. Substrate is bound by residues Asn-123 and Thr-173. Lys-175 (proton acceptor) is an active-site residue. Lys-177 is a binding site for substrate. Lys-201, Asp-203, and Glu-204 together coordinate Mg(2+). Lys-201 is modified (N6-carboxylysine). Residue His-294 is the Proton acceptor of the active site. Residues Arg-295, His-327, and Ser-379 each coordinate substrate.

It belongs to the RuBisCO large chain family. Type I subfamily. As to quaternary structure, heterohexadecamer of 8 large chains and 8 small chains; disulfide-linked. The disulfide link is formed within the large subunit homodimers. It depends on Mg(2+) as a cofactor. Post-translationally, the disulfide bond which can form in the large chain dimeric partners within the hexadecamer appears to be associated with oxidative stress and protein turnover.

It is found in the plastid. The protein resides in the chloroplast. It carries out the reaction 2 (2R)-3-phosphoglycerate + 2 H(+) = D-ribulose 1,5-bisphosphate + CO2 + H2O. It catalyses the reaction D-ribulose 1,5-bisphosphate + O2 = 2-phosphoglycolate + (2R)-3-phosphoglycerate + 2 H(+). In terms of biological role, ruBisCO catalyzes two reactions: the carboxylation of D-ribulose 1,5-bisphosphate, the primary event in carbon dioxide fixation, as well as the oxidative fragmentation of the pentose substrate in the photorespiration process. Both reactions occur simultaneously and in competition at the same active site. This Cruciata glabra (Slender crosswort) protein is Ribulose bisphosphate carboxylase large chain.